The primary structure comprises 338 residues: Lipoate-protein ligase A (338 aa).

Positions 29 to 216 constitute a BPL/LPL catalytic domain; the sequence is PATQRVLFLW…AFFAHYGERV (188 aa). Residues R71, 76–79, and K134 each bind ATP; that span reads GAVF. K134 is a binding site for (R)-lipoate.

The protein belongs to the LplA family. In terms of assembly, monomer.

The protein resides in the cytoplasm. It catalyses the reaction L-lysyl-[lipoyl-carrier protein] + (R)-lipoate + ATP = N(6)-[(R)-lipoyl]-L-lysyl-[lipoyl-carrier protein] + AMP + diphosphate + H(+). It participates in protein modification; protein lipoylation via exogenous pathway; protein N(6)-(lipoyl)lysine from lipoate: step 1/2. It functions in the pathway protein modification; protein lipoylation via exogenous pathway; protein N(6)-(lipoyl)lysine from lipoate: step 2/2. Functionally, catalyzes both the ATP-dependent activation of exogenously supplied lipoate to lipoyl-AMP and the transfer of the activated lipoyl onto the lipoyl domains of lipoate-dependent enzymes. This Escherichia coli (strain K12 / MC4100 / BW2952) protein is Lipoate-protein ligase A.